The primary structure comprises 336 residues: Fructose-1,6-bisphosphatase class 1 (336 aa).

Mg(2+)-binding residues include Glu90, Asp112, Leu114, and Asp115. Residues 115–118 (DGSS), Asn211, and Lys277 contribute to the substrate site. A Mg(2+)-binding site is contributed by Glu283.

This sequence belongs to the FBPase class 1 family. Homotetramer. Requires Mg(2+) as cofactor.

It localises to the cytoplasm. It carries out the reaction beta-D-fructose 1,6-bisphosphate + H2O = beta-D-fructose 6-phosphate + phosphate. Its pathway is carbohydrate biosynthesis; gluconeogenesis. The polypeptide is Fructose-1,6-bisphosphatase class 1 (Pseudomonas fluorescens (strain SBW25)).